The following is a 1181-amino-acid chain: Integrin alpha-7 (1181 aa).

A signal peptide spans 1–33 (MAGARSRDPWGASGICYLFGSLLVELLFSRAVA). Residues 34–1082 (FNLDVMGALR…MAVVAEGVPW (1049 aa)) are Extracellular-facing. FG-GAP repeat units lie at residues 35–103 (NLDV…ETDC), 110–175 (QGAD…IRDE), 185–238 (EGRP…SADL), 292–349 (DRLP…ASRL), 350–411 (VPEV…HWAG), 412–467 (ISPL…GVVA), and 471–530 (QVLE…IAPR). A glycan (N-linked (GlcNAc...) asparagine) is linked at Asn-86. 3 disulfide bridges follow: Cys-94–Cys-103, Cys-140–Cys-163, and Cys-184–Cys-197. Residues Asp-372, Asn-374, Asp-376, Asp-380, Asp-434, Asn-436, Asp-438, Asp-442, Asp-492, Asp-494, Asn-496, Tyr-498, and Asp-500 each contribute to the Ca(2+) site. Cystine bridges form between Cys-539–Cys-546, Cys-552–Cys-615, Cys-681–Cys-687, Cys-781–Cys-792, Cys-939–Cys-994, and Cys-1001–Cys-1006. An N-linked (GlcNAc...) asparagine glycan is attached at Asn-786. A compositionally biased stretch (basic and acidic residues) spans 950–961 (VDSRDRRRRELE). The disordered stretch occupies residues 950–978 (VDSRDRRRRELEPPEQQEPGERQEPSMSW). N-linked (GlcNAc...) asparagine glycosylation is present at Asn-989. 2 N-linked (GlcNAc...) asparagine glycosylation sites follow: Asn-1025 and Asn-1045. A helical membrane pass occupies residues 1083 to 1103 (WVILLAVLAGLLVLALLVLLL). Residues 1104–1181 (WKMGFFKRAK…PDGHPGPGTA (78 aa)) lie on the Cytoplasmic side of the membrane. The short motif at 1107 to 1111 (GFFKR) is the GFFKR motif element. Residues 1138–1181 (EKTGTILRNNWGSPRREGPDAHPILAADGHPELGPDGHPGPGTA) are disordered. Repeat copies occupy residues 1157–1160 (DAHP), 1165–1168 (DGHP), and 1173–1176 (DGHP). The segment at 1157–1176 (DAHPILAADGHPELGPDGHP) is 3 X 4 AA repeats of D-X-H-P.

This sequence belongs to the integrin alpha chain family. In terms of assembly, heterodimer of an alpha and a beta subunit. The alpha subunit is composed of a heavy and a light chain linked by a disulfide bond. Alpha-7 associates with beta-1. Interacts with COMP. Interacts (via C-terminus intracellular tail region) with CIB1; the interaction is stabilized/increased in a calcium- and magnesium-dependent manner. ADP-ribosylated on at least two sites of the extracellular domain in skeletal myotubes. In terms of processing, a 70 kDa form is created by proteolytic cleavage. Cleavage is elevated during myogenic differentiation and the cleaved form enhances cell adhesion and spreading on laminin. In terms of tissue distribution, isoforms containing segment A are predominantly expressed in skeletal muscle. Isoforms containing segment B are abundantly expressed in skeletal muscle, moderately in cardiac muscle, small intestine, colon, ovary and prostate and weakly in lung and testes. Isoforms containing segment X2D are expressed at low levels in fetal and adult skeletal muscle and in cardiac muscle, but are not detected in myoblasts and myotubes. In muscle fibers isoforms containing segment A and B are expressed at myotendinous and neuromuscular junctions; isoforms containing segment C are expressed at neuromuscular junctions and at extrasynaptic sites. Isoforms containing segments X1 or X2 or, at low levels, X1X2 are expressed in fetal and adult skeletal muscle (myoblasts and myotubes) and cardiac muscle.

Its subcellular location is the membrane. Functionally, integrin alpha-7/beta-1 is the primary laminin receptor on skeletal myoblasts and adult myofibers. During myogenic differentiation, it may induce changes in the shape and mobility of myoblasts, and facilitate their localization at laminin-rich sites of secondary fiber formation. It is involved in the maintenance of the myofibers cytoarchitecture as well as for their anchorage, viability and functional integrity. Isoform Alpha-7X2B and isoform Alpha-7X1B promote myoblast migration on laminin 1 and laminin 2/4, but isoform Alpha-7X1B is less active on laminin 1 (In vitro). Acts as a Schwann cell receptor for laminin-2. Acts as a receptor of COMP and mediates its effect on vascular smooth muscle cells (VSMCs) maturation. Required to promote contractile phenotype acquisition in differentiated airway smooth muscle (ASM) cells. The sequence is that of Integrin alpha-7 (ITGA7) from Homo sapiens (Human).